Reading from the N-terminus, the 188-residue chain is NANOG neighbor homeobox (188 aa).

The tract at residues 28-106 is disordered; that stretch reads ETILANKKQS…NEKQKQYPEK (79 aa). A compositionally biased stretch (basic and acidic residues) spans 57–106; it reads QNGKQKWREEGEAGRKREREKEEKNEKELQDEQENKRKRENEKQKQYPEK. The segment at residues 102–161 is a DNA-binding region (homeobox); the sequence is QYPEKRLVSKSLMHTLWAKFKLNRCPTIQESLSLSFEFDMTHKQISQWFCKTRKKYNKEM.

The protein localises to the nucleus. The protein is NANOG neighbor homeobox (NANOGNB) of Homo sapiens (Human).